Here is a 983-residue protein sequence, read N- to C-terminus: Nuclear factor NF-kappa-B p105 subunit (983 aa).

The RHD domain maps to 47 to 372; it reads PYLQIIEQPK…EVQRKRQKLM (326 aa). The residue at position 66 (cysteine 66) is an S-nitrosocysteine. Serine 342 carries the phosphoserine; by PKA modification. The Nuclear localization signal signature appears at 365 to 370; sequence QRKRQK. Residues 377 to 397 are GRR; it reads DGYGGGSGAGGGGMFGGGGGG. Positions 423–454 are disordered; sequence KSNAGMKHELSNSTVKKDEESSDKQSDKWDTK. Positions 428–454 are enriched in basic and acidic residues; that stretch reads MKHELSNSTVKKDEESSDKQSDKWDTK. 7 ANK repeats span residues 540-569, 579-608, 612-641, 648-677, 682-712, 716-745, and 769-799; these read NGDN…DMNY, LYQT…NVNL, HGNS…ASSM, EGLS…DVNA, SGRT…DVDS, DGTT…DPHV, and PGTT…AVSE. The Death domain maps to 804-891; that stretch reads QGPLRELNES…EAIEVIQKAL (88 aa). Serine 938 carries the post-translational modification Phosphoserine.

In terms of assembly, active NF-kappa-B is a heterodimer of an about 50 kDa DNA-binding subunit and the weak DNA-binding subunit p65. Two heterodimers might form a labile tetramer. Generation of the NF-kappa-B p50 (Nuclear factor NF-kappa-B p50 subunit) transcription factor takes place both cotranslationally and post-translationally via non-mutually exclusive mechanisms. A cotranslational processing allows the production of both p50 and p105 (Nuclear factor NF-kappa-B p105 subunit) from a single NFKB1 mRNA. While translation occurs, the particular unfolded structure after the GRR repeat region acts as a substrate for the proteasome, promoting degradation of the C-terminus. The GRR acts as a proteasomal 'stop signal', protecting the region upstream of the GRR from degradation and promoting generation of p50. It is unclear if limited proteasome degradation during cotranslational processing depends on ubiquitination. NF-kappa-B p50 is also generated post-translationally following ubiquitination by the KPC complex, leading to limited processing by the proteasome downstream of the GRR region, thereby generating p50. Post-translationally, phosphorylation at the C-terminus by IKBKB/IKKB acts as a signal for ubiquitination and promotes either complete degradation or processing to generate the NF-kappa-B p50 (Nuclear factor NF-kappa-B p50 subunit). Phosphorylation at Ser-938 are required for BTRC/BTRCP-mediated ubiquitination and proteolysis. Phosphorylation at Ser-938 is also required for ubiquitination by the KPC complex and limited processing to generate NF-kappa-B p50 (Nuclear factor NF-kappa-B p50 subunit). In terms of processing, polyubiquitinated at multiple Lys residues in the C-terminus. Polyubiquitinated by the SCF(FBXW11) and SCF(BTRC) complexes following phosphorylation at Ser-938, leading to its complete degradation. In contrast, polyubiquitination by the KPC complex following phosphorylation at Ser-938 leads to limited proteosomal processing and generation of the active NF-kappa-B p50 (Nuclear factor NF-kappa-B p50 subunit). S-nitrosylation of Cys-66 affects DNA binding. Post-translationally, the covalent modification of cysteine by 15-deoxy-Delta12,14-prostaglandin-J2 is autocatalytic and reversible. It may occur as an alternative to other cysteine modifications, such as S-nitrosylation and S-palmitoylation.

Its subcellular location is the cytoplasm. It localises to the nucleus. In terms of biological role, P105 is the precursor of the active p50 subunit (Nuclear factor NF-kappa-B p50 subunit) of the nuclear factor NF-kappa-B. The precursor protein itself does not bind to DNA. Acts as a cytoplasmic retention of attached NF-kappa-B proteins by p105. Constitutes the active form, which associates with RELA/p65 to form the NF-kappa-B p65-p50 complex to form a transcription factor. Together with RELA/p65, binds to the kappa-B consensus sequence 5'-GGRNNYYCC-3', located in the enhancer region of genes involved in immune response and acute phase reactions. This is Nuclear factor NF-kappa-B p105 subunit (NFKB1) from Gallus gallus (Chicken).